Consider the following 154-residue polypeptide: Endoribonuclease YbeY (154 aa).

Positions 113, 117, and 123 each coordinate Zn(2+).

This sequence belongs to the endoribonuclease YbeY family. It depends on Zn(2+) as a cofactor.

It localises to the cytoplasm. Functionally, single strand-specific metallo-endoribonuclease involved in late-stage 70S ribosome quality control and in maturation of the 3' terminus of the 16S rRNA. The chain is Endoribonuclease YbeY from Vibrio campbellii (strain ATCC BAA-1116).